The primary structure comprises 452 residues: Coproporphyrinogen III oxidase (452 aa).

FAD-binding positions include 10–15 (GGGISG), 36–37 (EP), 58–61 (GAEA), Val-242, Trp-390, and 426–428 (IGV).

This sequence belongs to the protoporphyrinogen/coproporphyrinogen oxidase family. Coproporphyrinogen III oxidase subfamily. The cofactor is FAD.

Its subcellular location is the cytoplasm. It catalyses the reaction coproporphyrinogen III + 3 O2 = coproporphyrin III + 3 H2O2. It participates in porphyrin-containing compound metabolism; protoheme biosynthesis. In terms of biological role, involved in coproporphyrin-dependent heme b biosynthesis. Catalyzes the oxidation of coproporphyrinogen III to coproporphyrin III. In Mycobacterium bovis (strain ATCC BAA-935 / AF2122/97), this protein is Coproporphyrinogen III oxidase.